The primary structure comprises 357 residues: 3-isopropylmalate dehydrogenase (357 aa).

Substrate is bound by residues Arg-97, Arg-107, Arg-135, and Asp-224. 3 residues coordinate Mg(2+): Asp-224, Asp-248, and Asp-252. 282–294 (GSAPDIAGQDLAN) is a binding site for NAD(+).

The protein belongs to the isocitrate and isopropylmalate dehydrogenases family. LeuB type 1 subfamily. In terms of assembly, homodimer. It depends on Mg(2+) as a cofactor. Mn(2+) serves as cofactor.

Its subcellular location is the cytoplasm. It carries out the reaction (2R,3S)-3-isopropylmalate + NAD(+) = 4-methyl-2-oxopentanoate + CO2 + NADH. It functions in the pathway amino-acid biosynthesis; L-leucine biosynthesis; L-leucine from 3-methyl-2-oxobutanoate: step 3/4. In terms of biological role, catalyzes the oxidation of 3-carboxy-2-hydroxy-4-methylpentanoate (3-isopropylmalate) to 3-carboxy-4-methyl-2-oxopentanoate. The product decarboxylates to 4-methyl-2 oxopentanoate. This Prochlorococcus marinus (strain MIT 9313) protein is 3-isopropylmalate dehydrogenase.